A 245-amino-acid polypeptide reads, in one-letter code: 1-(5-phosphoribosyl)-5-[(5-phosphoribosylamino)methylideneamino] imidazole-4-carboxamide isomerase (245 aa).

Catalysis depends on D11, which acts as the Proton acceptor. Residue D132 is the Proton donor of the active site.

This sequence belongs to the HisA/HisF family.

The protein resides in the cytoplasm. The enzyme catalyses 1-(5-phospho-beta-D-ribosyl)-5-[(5-phospho-beta-D-ribosylamino)methylideneamino]imidazole-4-carboxamide = 5-[(5-phospho-1-deoxy-D-ribulos-1-ylimino)methylamino]-1-(5-phospho-beta-D-ribosyl)imidazole-4-carboxamide. The protein operates within amino-acid biosynthesis; L-histidine biosynthesis; L-histidine from 5-phospho-alpha-D-ribose 1-diphosphate: step 4/9. The polypeptide is 1-(5-phosphoribosyl)-5-[(5-phosphoribosylamino)methylideneamino] imidazole-4-carboxamide isomerase (Xanthobacter autotrophicus (strain ATCC BAA-1158 / Py2)).